A 248-amino-acid chain; its full sequence is Small ribosomal subunit protein eS6 (248 aa).

The tract at residues 215 to 248 is disordered; it reads VQRKKESKAKREEAKRRRSASIRESKSSVSSDKK. Over residues 223 to 248 the composition is skewed to basic and acidic residues; the sequence is AKREEAKRRRSASIRESKSSVSSDKK. 6 positions are modified to phosphoserine: serine 233, serine 235, serine 239, serine 242, serine 244, and serine 245.

It belongs to the eukaryotic ribosomal protein eS6 family. In terms of assembly, component of the small ribosomal subunit. Part of the small subunit (SSU) processome, composed of more than 70 proteins and the RNA chaperone small nucleolar RNA (snoRNA) U3. In terms of processing, ribosomal protein S6 is the major substrate of protein kinases in eukaryote ribosomes. The phosphorylation is stimulated by growth factors, tumor promoting agents, and mitogens. It is dephosphorylated at growth arrest.

It localises to the cytoplasm. The protein localises to the nucleus. The protein resides in the nucleolus. Component of the 40S small ribosomal subunit. Plays an important role in controlling cell growth and proliferation through the selective translation of particular classes of mRNA. Part of the small subunit (SSU) processome, first precursor of the small eukaryotic ribosomal subunit. During the assembly of the SSU processome in the nucleolus, many ribosome biogenesis factors, an RNA chaperone and ribosomal proteins associate with the nascent pre-rRNA and work in concert to generate RNA folding, modifications, rearrangements and cleavage as well as targeted degradation of pre-ribosomal RNA by the RNA exosome. The sequence is that of Small ribosomal subunit protein eS6 (RpS6) from Drosophila melanogaster (Fruit fly).